The following is a 230-amino-acid chain: 3-isopropylmalate dehydratase small subunit (230 aa).

This sequence belongs to the LeuD family. LeuD type 1 subfamily. As to quaternary structure, heterodimer of LeuC and LeuD.

It carries out the reaction (2R,3S)-3-isopropylmalate = (2S)-2-isopropylmalate. It functions in the pathway amino-acid biosynthesis; L-leucine biosynthesis; L-leucine from 3-methyl-2-oxobutanoate: step 2/4. In terms of biological role, catalyzes the isomerization between 2-isopropylmalate and 3-isopropylmalate, via the formation of 2-isopropylmaleate. The chain is 3-isopropylmalate dehydratase small subunit from Bifidobacterium longum (strain DJO10A).